The sequence spans 530 residues: uncharacterized protein (530 aa).

A run of 5 helical transmembrane segments spans residues 4 to 23 (FLAANPLIALAVILAVGLAI), 28 to 47 (LFGVSLGAAAVLIVALVVST), 57 to 79 (FVFQLGLAMFVYVIGISAGPAFF), 91 to 113 (LFMITLLVSLTALAWVLIRAFGL), and 148 to 170 (VIGYSLAYPGAVLGSILVAAVGA). Positions 260 to 344 (LGGECDTKIE…MGEVRRFLGD (85 aa)) constitute an RCK C-terminal domain. The next 4 membrane-spanning stretches (helical) occupy residues 352 to 374 (VNLLPFAIGLSLGLLLGAIPVPL), 379 to 398 (TMYLGFGGGPIVAGLILGAL), 419 to 441 (LGLALFLAGVGTSAGAGFRQALT), and 451 to 473 (VGFAITVTSALVCAVVGMWLLKL).

It belongs to the AAE transporter (TC 2.A.81) family.

The protein localises to the cell membrane. This is an uncharacterized protein from Corynebacterium efficiens (strain DSM 44549 / YS-314 / AJ 12310 / JCM 11189 / NBRC 100395).